The following is a 193-amino-acid chain: Peptidyl-tRNA hydrolase (193 aa).

TRNA is bound at residue Tyr15. The Proton acceptor role is filled by His20. Positions 65, 67, and 113 each coordinate tRNA.

The protein belongs to the PTH family. In terms of assembly, monomer.

It is found in the cytoplasm. It catalyses the reaction an N-acyl-L-alpha-aminoacyl-tRNA + H2O = an N-acyl-L-amino acid + a tRNA + H(+). In terms of biological role, hydrolyzes ribosome-free peptidyl-tRNAs (with 1 or more amino acids incorporated), which drop off the ribosome during protein synthesis, or as a result of ribosome stalling. Its function is as follows. Catalyzes the release of premature peptidyl moieties from peptidyl-tRNA molecules trapped in stalled 50S ribosomal subunits, and thus maintains levels of free tRNAs and 50S ribosomes. This chain is Peptidyl-tRNA hydrolase, found in Ehrlichia canis (strain Jake).